Reading from the N-terminus, the 733-residue chain is Polyribonucleotide nucleotidyltransferase (733 aa).

The disordered stretch occupies residues 404 to 424 (NYNMPPYSTGETGRVGSPKRR). Positions 516 and 522 each coordinate Mg(2+). The KH domain occupies 582–641 (PRIITVHIPVDKIGEVIGPKGKMINQIQDDTGANISIEDDGTIFIGADNGDSAESARSMI). Residues 653-725 (GERYLGTVVK…DRGKLSLVLA (73 aa)) enclose the S1 motif domain.

It belongs to the polyribonucleotide nucleotidyltransferase family. The cofactor is Mg(2+).

It localises to the cytoplasm. It carries out the reaction RNA(n+1) + phosphate = RNA(n) + a ribonucleoside 5'-diphosphate. Its function is as follows. Involved in mRNA degradation. Catalyzes the phosphorolysis of single-stranded polyribonucleotides processively in the 3'- to 5'-direction. The protein is Polyribonucleotide nucleotidyltransferase of Cutibacterium acnes (strain DSM 16379 / KPA171202) (Propionibacterium acnes).